Consider the following 398-residue polypeptide: uncharacterized protein (398 aa).

The first 22 residues, 1–22 (MKLKFYKLPLITTAFSFVFLTA), serve as a signal peptide directing secretion. Residue cysteine 23 is the site of N-palmitoyl cysteine attachment. Cysteine 23 is lipidated: S-diacylglycerol cysteine.

The protein resides in the cell membrane. This is an uncharacterized protein from Mycoplasma genitalium (strain ATCC 33530 / DSM 19775 / NCTC 10195 / G37) (Mycoplasmoides genitalium).